We begin with the raw amino-acid sequence, 329 residues long: MASQLTDAFARKFYYLRLSITDVCNFRCTYCLPDGYKPSGVTNKGFLTVDEIRRVTRAFASLGTEKVRLTGGEPSLRRDFTDIIAAVRENDAIRQIAVTTNGYRLERDVANWRDAGLTGINVSVDSLDARQFHAITGQDKFNQVMAGIDAAFEAGFEKVKVNTVLMRDVNHHQLDTFLNWIQHRPIQLRFIELMETGEGSELFRKHHISGQVLRDELLRRGWIHQLRQRSDGPAQVFCHPDYAGEIGLIMPYEKDFCATCNRLRVSSIGKLHLCLFGEGGVNLRDLLEDDAQQQALEARISAALREKKQTHFLHQNNTGITQNLSYIGG.

Positions 8-234 (AFARKFYYLR…QLRQRSDGPA (227 aa)) constitute a Radical SAM core domain. Arg17 is a GTP binding site. [4Fe-4S] cluster-binding residues include Cys24 and Cys28. Tyr30 is a binding site for S-adenosyl-L-methionine. Residue Cys31 coordinates [4Fe-4S] cluster. A GTP-binding site is contributed by Arg68. Gly72 is an S-adenosyl-L-methionine binding site. Position 99 (Thr99) interacts with GTP. S-adenosyl-L-methionine is bound at residue Ser123. Lys160 lines the GTP pocket. Position 194 (Met194) interacts with S-adenosyl-L-methionine. Residues Cys257 and Cys260 each contribute to the [4Fe-4S] cluster site. Residue 262–264 (RLR) coordinates GTP. [4Fe-4S] cluster is bound at residue Cys274.

Belongs to the radical SAM superfamily. MoaA family. In terms of assembly, monomer and homodimer. It depends on [4Fe-4S] cluster as a cofactor.

It catalyses the reaction GTP + AH2 + S-adenosyl-L-methionine = (8S)-3',8-cyclo-7,8-dihydroguanosine 5'-triphosphate + 5'-deoxyadenosine + L-methionine + A + H(+). Its pathway is cofactor biosynthesis; molybdopterin biosynthesis. Catalyzes the cyclization of GTP to (8S)-3',8-cyclo-7,8-dihydroguanosine 5'-triphosphate. The chain is GTP 3',8-cyclase from Shigella dysenteriae serotype 1 (strain Sd197).